A 302-amino-acid chain; its full sequence is Recombination-associated protein RdgC (302 aa).

This sequence belongs to the RdgC family.

The protein resides in the cytoplasm. It is found in the nucleoid. In terms of biological role, may be involved in recombination. The sequence is that of Recombination-associated protein RdgC from Xanthomonas campestris pv. campestris (strain 8004).